The following is a 461-amino-acid chain: Protein-serine O-palmitoleoyltransferase porcupine (461 aa).

The Cytoplasmic segment spans residues 1–17; the sequence is MATFSRQEFFQQLLQGC. Residues 18–38 form a helical membrane-spanning segment; it reads LLPTVQQGLDQIWLLLTICFA. The Extracellular portion of the chain corresponds to 39 to 66; the sequence is CRLLWRLGLPSYLKHASTVAGGFFSLYH. Residues 67 to 87 form a helical membrane-spanning segment; it reads FFQLHMVWVVLLSLLCYLVLF. At 88–95 the chain is on the cytoplasmic side; sequence LCRHSSHR. The chain crosses the membrane as a helical span at residues 96–116; sequence GVFLSVTILIYLLMGEMHMVD. Residues 117 to 152 are Extracellular-facing; the sequence is TVTWHKMRGAQMIVAMKAVSLGFDLDRGEVGAVPSP. The helical transmembrane segment at 153–173 threads the bilayer; it reads VEFMGYLYFVGTIVFGPWISF. The Cytoplasmic portion of the chain corresponds to 174-198; sequence HSYLQAVQGRPLSRRWLKKVARSLA. Residues 199–219 form a helical membrane-spanning segment; that stretch reads LALLCLVLSTCVGPYLFPYFI. Residues 220 to 252 are Extracellular-facing; that stretch reads PLDGDRLLRNKKRKARGTMVRWLRAYESAVSFH. A helical transmembrane segment spans residues 253-273; sequence FSNYFVGFLSEATATLAGAGF. The Cytoplasmic portion of the chain corresponds to 274–337; the sequence is TEEKDHLEWD…SAVLVTYAAS (64 aa). A helical transmembrane segment spans residues 338-358; that stretch reads ALLHGFSFHLAAVLLSLAFIT. Residue histidine 341 is part of the active site. The Extracellular portion of the chain corresponds to 359–396; it reads YVEHVLRKRLAQILSACILSKRCLPDCSHRHRLGLGVR. The helical transmembrane segment at 397-417 threads the bilayer; the sequence is ALNLLFGALAIFHLSYLGSLF. The Cytoplasmic portion of the chain corresponds to 418–461; that stretch reads DVDVDDTTEEQGYGMAYTVHKWSELSWASHWVTFGCWIFYRLIG.

It belongs to the membrane-bound acyltransferase family. Porcupine subfamily. Interacts with WNT1, WNT3, WNT3A, WNT4, WNT5A, WNT5B, WNT6, WNT7A and WNT7B. In terms of tissue distribution, expressed in brain, heart, kidney, liver, lung, muscle, spleen and testis. Isoform 4 is strongly expressed in kidney, liver, lung, spleen and testis. Isoform 1 is strongly expressed in brain, heart and muscle and poorly in kidney, liver, lung, spleen and testis.

The protein resides in the endoplasmic reticulum membrane. It carries out the reaction [Wnt protein]-L-serine + (9Z)-hexadecenoyl-CoA = [Wnt protein]-O-(9Z)-hexadecenoyl-L-serine + CoA. Functionally, protein-serine O-palmitoleoyltransferase that acts as a key regulator of the Wnt signaling pathway by mediating the attachment of palmitoleate, a 16-carbon monounsaturated fatty acid (C16:1(9Z)), to Wnt proteins. Serine palmitoleoylation of WNT proteins is required for efficient binding to frizzled receptors. The polypeptide is Protein-serine O-palmitoleoyltransferase porcupine (Mus musculus (Mouse)).